The sequence spans 346 residues: D-alanine--D-alanine ligase (346 aa).

Residues 133–327 (KLYAKSVGVK…TLADQIPLEK (195 aa)) form the ATP-grasp domain. Position 159-211 (159-211 (LRFPCIIKPARLGSSIGISIVKDEKDLEYAKDVGFEFDNDLVVEEFKNNIKEY)) interacts with ATP. Aspartate 284, glutamate 296, and asparagine 298 together coordinate Mg(2+).

This sequence belongs to the D-alanine--D-alanine ligase family. Mg(2+) is required as a cofactor. It depends on Mn(2+) as a cofactor.

It is found in the cytoplasm. It catalyses the reaction 2 D-alanine + ATP = D-alanyl-D-alanine + ADP + phosphate + H(+). The protein operates within cell wall biogenesis; peptidoglycan biosynthesis. Functionally, cell wall formation. This chain is D-alanine--D-alanine ligase, found in Campylobacter jejuni subsp. doylei (strain ATCC BAA-1458 / RM4099 / 269.97).